We begin with the raw amino-acid sequence, 171 residues long: Adenine phosphoribosyltransferase (171 aa).

It belongs to the purine/pyrimidine phosphoribosyltransferase family. As to quaternary structure, homodimer.

It localises to the cytoplasm. The enzyme catalyses AMP + diphosphate = 5-phospho-alpha-D-ribose 1-diphosphate + adenine. It functions in the pathway purine metabolism; AMP biosynthesis via salvage pathway; AMP from adenine: step 1/1. Catalyzes a salvage reaction resulting in the formation of AMP, that is energically less costly than de novo synthesis. This is Adenine phosphoribosyltransferase from Natranaerobius thermophilus (strain ATCC BAA-1301 / DSM 18059 / JW/NM-WN-LF).